A 450-amino-acid chain; its full sequence is Chromosomal replication initiator protein DnaA (450 aa).

Residues 1–84 (MENIHDLWDR…AVKFIIPPNQ (84 aa)) form a domain I, interacts with DnaA modulators region. The domain II stretch occupies residues 84 to 111 (QDDEELEFQSSKKKQRKPYEETNDFPQS). The interval 89 to 108 (LEFQSSKKKQRKPYEETNDF) is disordered. The tract at residues 112–328 (MLNPKYTFDT…GALIRVVAYS (217 aa)) is domain III, AAA+ region. 4 residues coordinate ATP: G156, G158, K159, and T160. Residues 329-450 (SLINKEITAD…QEIQEKLKQL (122 aa)) form a domain IV, binds dsDNA region.

This sequence belongs to the DnaA family. Oligomerizes as a right-handed, spiral filament on DNA at oriC.

It is found in the cytoplasm. Plays an essential role in the initiation and regulation of chromosomal replication. ATP-DnaA binds to the origin of replication (oriC) to initiate formation of the DNA replication initiation complex once per cell cycle. Binds the DnaA box (a 9 base pair repeat at the origin) and separates the double-stranded (ds)DNA. Forms a right-handed helical filament on oriC DNA; dsDNA binds to the exterior of the filament while single-stranded (ss)DNA is stabiized in the filament's interior. The ATP-DnaA-oriC complex binds and stabilizes one strand of the AT-rich DNA unwinding element (DUE), permitting loading of DNA polymerase. After initiation quickly degrades to an ADP-DnaA complex that is not apt for DNA replication. Binds acidic phospholipids. This chain is Chromosomal replication initiator protein DnaA, found in Geobacillus kaustophilus (strain HTA426).